Consider the following 640-residue polypeptide: MEATAGGSRRRPTLLRLLCPKKSLVSPPTPSLRWLLGSPRFLPPLTVAAALRSLPDGASSPDLQREAEEIRGLLVRGFDIVGAVHVGSADAGGALELARAVRERLYGERASHGMVGGCVELGTGEIRFVVSEGDGVEAVEVTEVVWEDDPGRLLWEKGCLLRCELLLKLPLYVPSDDTSGIEARFYSLIESTASKLRDPHVSYLIEGPRTTPGESHYSIILHGNDLNSVPHLSRNGSTEEYDANIVSCSKFFPAKRSLSLTRENADAIQITILSNQSFNSSKASTPAVEYFPAPALASLRAINLKLDILCYTSVDFPVAAAVSELVIPGLADQLSIMKKAIVSELTTQQPQLSPYHFVPPGLLIPVTTIYDTRYGEIEEKQSELRRNLHLRLQLPLDRPLLRISNALNFSIGGTDKKASKSGSSLLRDVHREIPSSGVSGGIISLIDGSYEYYHYLHDGIDDNGWGCAYRSLQTIMSWYRLQQYSSINVPSHREIQQVLVEIGDKDPSFIGSREWIGAIELSFVLDKLLGVSCKVINVRSGDELPEKCRELAIHFETQGTPVMIGGGVLAYTLLGVDYNESSGDCAFLILDPHYTGADDLKKIVNGGWCGWKKSIDSKGRSFFLKDKFYNLLLPQRPNMV.

Active-site residues include Cys467, Asp591, and His593.

Belongs to the peptidase C78 family.

In terms of biological role, thiol protease which recognizes and hydrolyzes the peptide bond at the C-terminal Gly of ufm-1, a ubiquitin-like modifier protein bound to a number of target proteins. The sequence is that of Probable Ufm1-specific protease from Oryza sativa subsp. japonica (Rice).